The following is a 182-amino-acid chain: Protein SYM1 (182 aa).

3 helical membrane-spanning segments follow: residues T51–Y70, L98–G118, and L135–V155.

The protein belongs to the peroxisomal membrane protein PXMP2/4 family.

It localises to the mitochondrion inner membrane. May be involved in cellular response to stress. Required to maintain mitochondrial DNA (mtDNA) integrity and stability. The polypeptide is Protein SYM1 (SYM1) (Eremothecium gossypii (strain ATCC 10895 / CBS 109.51 / FGSC 9923 / NRRL Y-1056) (Yeast)).